A 556-amino-acid chain; its full sequence is Membrane protein insertase YidC (556 aa).

The next 5 helical transmembrane spans lie at 6–26, 332–352, 358–378, 428–448, and 501–521; these read IVLY…WQID, LDLT…FSLM, VVGN…LAFY, LGGC…YWVL, and VMMF…SGLV.

Belongs to the OXA1/ALB3/YidC family. Type 1 subfamily. In terms of assembly, interacts with the Sec translocase complex via SecD. Specifically interacts with transmembrane segments of nascent integral membrane proteins during membrane integration.

It is found in the cell inner membrane. Required for the insertion and/or proper folding and/or complex formation of integral membrane proteins into the membrane. Involved in integration of membrane proteins that insert both dependently and independently of the Sec translocase complex, as well as at least some lipoproteins. Aids folding of multispanning membrane proteins. The sequence is that of Membrane protein insertase YidC from Legionella pneumophila (strain Paris).